A 301-amino-acid chain; its full sequence is N-acetylmuramic acid 6-phosphate etherase (301 aa).

Residues 55–215 (IADALRAGGR…STISMVALGK (161 aa)) form the SIS domain. Glu-83 (proton donor) is an active-site residue. Glu-111 is an active-site residue.

The protein belongs to the GCKR-like family. MurNAc-6-P etherase subfamily. As to quaternary structure, homodimer.

The enzyme catalyses N-acetyl-D-muramate 6-phosphate + H2O = N-acetyl-D-glucosamine 6-phosphate + (R)-lactate. The protein operates within amino-sugar metabolism; 1,6-anhydro-N-acetylmuramate degradation. It participates in amino-sugar metabolism; N-acetylmuramate degradation. Its pathway is cell wall biogenesis; peptidoglycan recycling. Specifically catalyzes the cleavage of the D-lactyl ether substituent of MurNAc 6-phosphate, producing GlcNAc 6-phosphate and D-lactate. Together with AnmK, is also required for the utilization of anhydro-N-acetylmuramic acid (anhMurNAc) either imported from the medium or derived from its own cell wall murein, and thus plays a role in cell wall recycling. This is N-acetylmuramic acid 6-phosphate etherase from Burkholderia lata (strain ATCC 17760 / DSM 23089 / LMG 22485 / NCIMB 9086 / R18194 / 383).